An 874-amino-acid chain; its full sequence is Mannuronan C5-epimerase AlgE6 (874 aa).

PbH1 repeat units follow at residues 133–155, 157–179, 180–202, 204–226, 234–256, 257–279, 280–302, and 320–351; these read DRNV…DPHE, TINL…VADY, QIGG…NIVT, TNDF…VVQR, PENI…LVKM, SNNV…RVYG, AQGV…APEV, and TLNT…DFSS. 7 Hemolysin-type calcium-binding repeats span residues 383 to 394, 401 to 417, 419 to 435, 562 to 578, 580 to 596, 723 to 739, and 741 to 757; these read GTDGNDVLIGSD, GGAG…DDLL, GGAG…ADTF, GGGG…GDLL, and GGGG…NDLL. Residues 401–420 are disordered; that stretch reads GGAGDDRLDGGAGDDLLDGG.

It belongs to the D-mannuronate C5-epimerase family. Requires Ca(2+) as cofactor.

It localises to the secreted. The catalysed reaction is [(1-&gt;4)-beta-D-mannuronosyl](n) = [alginate](n). The protein operates within glycan biosynthesis; alginate biosynthesis. Its activity is regulated as follows. Inhibited by zinc. In terms of biological role, converts beta-D-mannuronic acid (M) to alpha-L-guluronic acid (G), producing a polymer with gel-forming capacity, required for the formation of the cyst coat. This Azotobacter vinelandii protein is Mannuronan C5-epimerase AlgE6.